A 503-amino-acid polypeptide reads, in one-letter code: MTDQSGNGVRSGSASEAPPSAKADFVVVANRLPIDQVNLPDGSTEWKRSPGGLVTALEPLLRRRHGAWIGWPGVPEDADDPDASTEPIEQDGMTLVPVRLSAADVAKYYEGFSNATLWPLYHDVIVKPTYHREWWERYVEVNRRFAEAAARTAAEGATVWVQDYQLQLVPKMLRMLRPDLTIGFFLHIPFPPVELFLQMPWRTEIIEGLLGADLVGFHLPGGAQNFLILARRLLGAVTSRGNVGVRSRFGEVQFGFRKVKVGAFPISIDSAELDQHARTRATRQRAKEIRAELGNPRKVLLGVDRLDYTKGIDVRLRAFSELLEEGRIDPEDTVLVQLATPSRERVQSYIEMREDIERQVGHVNGEFGKVGHPVLHYLHRPIPREDLVAFFVAADVMLVTPLRDGMNLVAKEYVACRHDLGGALVLSEFTGAAAELRQAYLTNPHHLEGVKDAIEAALNQSPEEGRRRMRALRRQVLAHDVDRWARSFLDALASREPINEESH.

A compositionally biased stretch (polar residues) spans 1–14 (MTDQSGNGVRSGSA). The disordered stretch occupies residues 1-20 (MTDQSGNGVRSGSASEAPPS). D-glucose 6-phosphate is bound at residue Arg31. 51–52 (GG) contacts UDP-alpha-D-glucose. The D-glucose 6-phosphate site is built by Tyr109 and Asp163. UDP-alpha-D-glucose-binding residues include Arg305 and Lys310. D-glucose 6-phosphate is bound at residue Arg343. 408 to 412 (LVAKE) contacts UDP-alpha-D-glucose.

This sequence belongs to the glycosyltransferase 20 family. Homotetramer.

It carries out the reaction ADP-alpha-D-glucose + D-glucose 6-phosphate = alpha,alpha-trehalose 6-phosphate + ADP + H(+). The catalysed reaction is CDP-alpha-D-glucose + D-glucose 6-phosphate = alpha,alpha-trehalose 6-phosphate + CDP + H(+). The enzyme catalyses GDP-alpha-D-glucose + D-glucose 6-phosphate = alpha,alpha-trehalose 6-phosphate + GDP + H(+). It catalyses the reaction TDP-alpha-D-glucose + D-glucose 6-phosphate = 5-methyl-UDP + alpha,alpha-trehalose 6-phosphate + H(+). It carries out the reaction D-glucose 6-phosphate + UDP-alpha-D-glucose = alpha,alpha-trehalose 6-phosphate + UDP + H(+). The protein operates within glycan biosynthesis; trehalose biosynthesis. Its function is as follows. Probably involved in the osmoprotection via the biosynthesis of trehalose and in the production of glycogen and alpha-glucan via the TreS-Pep2 branch involved in the biosynthesis of maltose-1-phosphate (M1P). Catalyzes the transfer of glucose from UDP-glucose (UDP-Glc) to D-glucose 6-phosphate (Glc-6-P) to form trehalose-6-phosphate. Probably also able to use ADP-Glc, CDP-Glc, GDP-Glc and TDP-Glc as glucosyl donors. This is Trehalose-6-phosphate synthase from Mycolicibacterium gilvum (strain PYR-GCK) (Mycobacterium gilvum (strain PYR-GCK)).